The sequence spans 212 residues: Golgi SNAP receptor complex member 2 (212 aa).

The residue at position 1 (methionine 1) is an N-acetylmethionine. The Cytoplasmic portion of the chain corresponds to 1–190; it reads MEPLYQQTNK…LIEKRAFQDK (190 aa). Residues 60–92 are a coiled coil; that stretch reads LNRRQNAKLRVDQLKYDVQHLQTALRNFQHRRQ. Residues 118-120 carry the IxM motif; signal for cargo packaging into COPII-coated vesicles motif; the sequence is IPM. The chain crosses the membrane as a helical; Anchor for type IV membrane protein span at residues 191-211; sequence YFMIGGMLLTCAVMFLVVQYL. A topological domain (vesicular) is located at residue threonine 212.

It belongs to the GOSR2 family. Part of a unique SNARE complex composed of the Golgi SNAREs GOSR1, STX5 and YKT6. Interacts with BET1.

It is found in the golgi apparatus. Its subcellular location is the cis-Golgi network membrane. It localises to the golgi apparatus membrane. The protein resides in the endoplasmic reticulum membrane. In terms of biological role, involved in transport of proteins from the cis/medial-Golgi to the trans-Golgi network. This Mus musculus (Mouse) protein is Golgi SNAP receptor complex member 2 (Gosr2).